A 260-amino-acid chain; its full sequence is 21S rRNA pseudouridine(2819) synthase (260 aa).

Asp-68 is an active-site residue.

Belongs to the pseudouridine synthase RluA family.

Its subcellular location is the mitochondrion. It carries out the reaction uridine(2819) in 21S rRNA = pseudouridine(2819) in 21S rRNA. Its function is as follows. Pseudouridylate synthase responsible for the pseudouridine-2819 formation in mitochondrial 21S rRNA. May modulate the efficiency or the fidelity of the mitochondrial translation machinery. This is 21S rRNA pseudouridine(2819) synthase (PUS5) from Eremothecium gossypii (strain ATCC 10895 / CBS 109.51 / FGSC 9923 / NRRL Y-1056) (Yeast).